A 60-amino-acid chain; its full sequence is Large ribosomal subunit protein bL32 (60 aa).

The disordered stretch occupies residues 1-60 (MAVQQNKKTPSKRGMHRSHDFLVAPQLSVEQTTGETHMRHHISPNGFYRGRKVLKTKNDE). Over residues 49–60 (RGRKVLKTKNDE) the composition is skewed to basic residues.

This sequence belongs to the bacterial ribosomal protein bL32 family.

The sequence is that of Large ribosomal subunit protein bL32 from Herminiimonas arsenicoxydans.